The sequence spans 198 residues: Glycerol-3-phosphate acyltransferase 2 (198 aa).

4 consecutive transmembrane segments (helical) span residues 4 to 24 (TYLL…LVVG), 71 to 91 (LPII…AVLG), 113 to 133 (LLCY…SLLF), and 147 to 167 (VVAV…AMCL).

This sequence belongs to the PlsY family. Probably interacts with PlsX.

The protein localises to the cell membrane. The catalysed reaction is an acyl phosphate + sn-glycerol 3-phosphate = a 1-acyl-sn-glycero-3-phosphate + phosphate. The protein operates within lipid metabolism; phospholipid metabolism. Its function is as follows. Catalyzes the transfer of an acyl group from acyl-phosphate (acyl-PO(4)) to glycerol-3-phosphate (G3P) to form lysophosphatidic acid (LPA). This enzyme utilizes acyl-phosphate as fatty acyl donor, but not acyl-CoA or acyl-ACP. The chain is Glycerol-3-phosphate acyltransferase 2 from Bacillus cereus (strain ATCC 10987 / NRS 248).